Reading from the N-terminus, the 133-residue chain is Small ribosomal subunit protein bS16 (133 aa).

The segment covering 83–101 (KRDARSNPKKAEPGKKAQE) has biased composition (basic and acidic residues). The interval 83-102 (KRDARSNPKKAEPGKKAQER) is disordered.

It belongs to the bacterial ribosomal protein bS16 family.

This Mesorhizobium japonicum (strain LMG 29417 / CECT 9101 / MAFF 303099) (Mesorhizobium loti (strain MAFF 303099)) protein is Small ribosomal subunit protein bS16.